A 735-amino-acid chain; its full sequence is Rho GTPase-activating protein SYDE1 (735 aa).

Disordered regions lie at residues 1–253 (MAEP…PYEV), 601–655 (PDTR…AGDW), and 669–706 (FLSG…FDAP). Basic and acidic residues predominate over residues 14–47 (RGREKLPRKKSDAKDRGRPAQRSEPKPPEPEPRV). Over residues 151–160 (PTKTSRTKSP) the composition is skewed to low complexity. S224, S231, S235, and S244 each carry phosphoserine. The C2 domain maps to 249–366 (RPYEVGPSAR…FRGCQAQQLA (118 aa)). In terms of domain architecture, Rho-GAP spans 398–604 (LPLQLLVERE…YLLQSWPDTR (207 aa)). The span at 669 to 679 (FLSGPDYDHVT) shows a compositional bias: basic and acidic residues. Phosphoserine occurs at positions 681 and 683.

Palmitoylated. Probably palmitoylated by ZDHHC3 and ZDHHC7.

Its function is as follows. GTPase activator for the Rho-type GTPases. As a GCM1 downstream effector, it is involved in placental development and positively regulates trophoblast cells migration. It regulates cytoskeletal remodeling by controlling the activity of Rho GTPases including RHOA, CDC42 and RAC1. The polypeptide is Rho GTPase-activating protein SYDE1 (Syde1) (Rattus norvegicus (Rat)).